Reading from the N-terminus, the 214-residue chain is Thymidylate kinase (214 aa).

An ATP-binding site is contributed by 10–17; sequence GGEGVGKT.

The protein belongs to the thymidylate kinase family.

It carries out the reaction dTMP + ATP = dTDP + ADP. Functionally, phosphorylation of dTMP to form dTDP in both de novo and salvage pathways of dTTP synthesis. In Bartonella quintana (strain Toulouse) (Rochalimaea quintana), this protein is Thymidylate kinase.